Consider the following 345-residue polypeptide: 3-isopropylmalate dehydrogenase (345 aa).

The substrate site is built by Arg-94, Arg-104, Arg-130, and Asp-215. Residues Asp-215, Asp-239, and Asp-243 each coordinate Mg(2+). Position 273–285 (273–285) interacts with NAD(+); the sequence is GSAPDIAGKGIAN.

Belongs to the isocitrate and isopropylmalate dehydrogenases family. LeuB type 1 subfamily. In terms of assembly, homodimer. It depends on Mg(2+) as a cofactor. Mn(2+) is required as a cofactor.

It is found in the cytoplasm. It catalyses the reaction (2R,3S)-3-isopropylmalate + NAD(+) = 4-methyl-2-oxopentanoate + CO2 + NADH. It functions in the pathway amino-acid biosynthesis; L-leucine biosynthesis; L-leucine from 3-methyl-2-oxobutanoate: step 3/4. In terms of biological role, catalyzes the oxidation of 3-carboxy-2-hydroxy-4-methylpentanoate (3-isopropylmalate) to 3-carboxy-4-methyl-2-oxopentanoate. The product decarboxylates to 4-methyl-2 oxopentanoate. This Lactococcus lactis subsp. lactis (strain IL1403) (Streptococcus lactis) protein is 3-isopropylmalate dehydrogenase (leuB).